Here is a 129-residue protein sequence, read N- to C-terminus: Histone H2A.J (129 aa).

Positions 1–22 are disordered; that stretch reads MSGRGKQGGKVRAKAKSRSSRA. An N6-acetyllysine mark is found at lysine 6 and lysine 10. Basic residues predominate over residues 7–19; the sequence is QGGKVRAKAKSRS. Lysine 10 carries the post-translational modification N6-lactoyllysine; alternate. Glutamine 105 carries the post-translational modification N5-methylglutamine. Position 121 is a phosphothreonine; by DCAF1 (threonine 121).

Belongs to the histone H2A family. As to quaternary structure, the nucleosome is a histone octamer containing two molecules each of H2A, H2B, H3 and H4 assembled in one H3-H4 heterotetramer and two H2A-H2B heterodimers. The octamer wraps approximately 147 bp of DNA. Post-translationally, monoubiquitination of Lys-120 (H2AXK119ub) gives a specific tag for epigenetic transcriptional repression. Following DNA double-strand breaks (DSBs), it is ubiquitinated through 'Lys-63' linkage of ubiquitin moieties. Glutamine methylation at Gln-105 (H2AQ104me) by FBL is specifically dedicated to polymerase I. It is present at 35S ribosomal DNA locus and impairs binding of the FACT complex. In terms of processing, phosphorylation on Ser-2 (H2AS1ph) is enhanced during mitosis. Phosphorylation on Ser-2 by RPS6KA5/MSK1 directly represses transcription. Acetylation of H3 inhibits Ser-2 phosphorylation by RPS6KA5/MSK1. Phosphorylation at Thr-121 (H2AT120ph) by DCAF1 is present in the regulatory region of many tumor suppresor genes and down-regulates their transcription.

It localises to the nucleus. Its subcellular location is the chromosome. Core component of nucleosome. Nucleosomes wrap and compact DNA into chromatin, limiting DNA accessibility to the cellular machineries which require DNA as a template. Histones thereby play a central role in transcription regulation, DNA repair, DNA replication and chromosomal stability. DNA accessibility is regulated via a complex set of post-translational modifications of histones, also called histone code, and nucleosome remodeling. The protein is Histone H2A.J of Mus musculus (Mouse).